A 212-amino-acid chain; its full sequence is Regulator of G-protein signaling 2 (212 aa).

2 disordered regions span residues 11–33 (HDCGPMDKSAGTGPKSEEKREKM) and 48–69 (FLQNSSSPGKPKTGKKSKPQTF). The necessary for membrane association stretch occupies residues 32 to 66 (KMKRTLLKDWKTRLSYFLQNSSSPGKPKTGKKSKP). Residues 79–116 (LWAEAFDELLASKYGLAAFRAFLKSEFCEENIEFWLAC) form a necessary to inhibit protein synthesis region. The RGS domain occupies 83–199 (AFDELLASKY…LESEFYQDLC (117 aa)).

As to quaternary structure, interacts with GNAQ. Does not interact with GNAI1 and GNAI3. Interacts with EIF2B5. Interacts with PRKG1 (isoform alpha). Post-translationally, phosphorylated by protein kinase C. Phosphorylation by PRKG1 leads to activation of RGS2 activity.

Its subcellular location is the cell membrane. The protein localises to the cytoplasm. It is found in the nucleus. It localises to the nucleolus. Regulates G protein-coupled receptor signaling cascades. Inhibits signal transduction by increasing the GTPase activity of G protein alpha subunits, thereby driving them into their inactive GDP-bound form. It is involved in the negative regulation of the angiotensin-activated signaling pathway. Plays a role in the regulation of blood pressure in response to signaling via G protein-coupled receptors and GNAQ. Plays a role in regulating the constriction and relaxation of vascular smooth muscle. Binds EIF2B5 and blocks its activity, thereby inhibiting the translation of mRNA into protein. In Sus scrofa (Pig), this protein is Regulator of G-protein signaling 2 (RGS2).